We begin with the raw amino-acid sequence, 222 residues long: 7-cyano-7-deazaguanine synthase (222 aa).

Position 7–17 (7–17 (LSGGMDSAVAT)) interacts with ATP. 4 residues coordinate Zn(2+): C188, C196, C199, and C202.

The protein belongs to the QueC family. Zn(2+) is required as a cofactor.

The catalysed reaction is 7-carboxy-7-deazaguanine + NH4(+) + ATP = 7-cyano-7-deazaguanine + ADP + phosphate + H2O + H(+). The protein operates within purine metabolism; 7-cyano-7-deazaguanine biosynthesis. Functionally, catalyzes the ATP-dependent conversion of 7-carboxy-7-deazaguanine (CDG) to 7-cyano-7-deazaguanine (preQ(0)). The protein is 7-cyano-7-deazaguanine synthase of Methanothermobacter thermautotrophicus (strain ATCC 29096 / DSM 1053 / JCM 10044 / NBRC 100330 / Delta H) (Methanobacterium thermoautotrophicum).